The following is a 327-amino-acid chain: MSKVVVCAMYKFVSLPDFERIQKPLLIVMEKSGIKGTLLLAKEGINGTVAGSQSAIDALLAWLATQPGLDNIVHKLSFDDDMPFYRTKVKLKKEIVTMGVEGIDPNEVVGTYVKPKDWNALISDPEVLLVDTRNDYEVKIGTFENALDPQTATFREFPEYVKQNLDPTKHKKVAMFCTGGIRCEKSTAYLKEQGFEDVYHLEGGILKYLEEVKQEESMWQGECFVFDNRVAVNHDLEKGQYDQCNACRMPITEAEKASSQFEQGVSCPHCIDKVTDKQRERFLERERQVQLSKQRGEAHIGSDVSAVIESRRAKKEQLKKSQNEKSV.

Residues 123–217 (SDPEVLLVDT…YLEEVKQEES (95 aa)) form the Rhodanese domain. Catalysis depends on Cys177, which acts as the Cysteine persulfide intermediate.

Belongs to the TrhO family.

The enzyme catalyses uridine(34) in tRNA + AH2 + O2 = 5-hydroxyuridine(34) in tRNA + A + H2O. In terms of biological role, catalyzes oxygen-dependent 5-hydroxyuridine (ho5U) modification at position 34 in tRNAs. This Shewanella piezotolerans (strain WP3 / JCM 13877) protein is tRNA uridine(34) hydroxylase.